The sequence spans 558 residues: FRIGIDA-like protein 3 (558 aa).

A coiled-coil region spans residues 9–102 (SLMDSTSSKI…ALERLQKKRD (94 aa)). The span at 454-463 (AKADKKRATE) shows a compositional bias: basic and acidic residues. The disordered stretch occupies residues 454–494 (AKADKKRATEPMKPQPKRPRGAQPRVTDNNNNINNNKTGYG).

Belongs to the Frigida family.

The protein is FRIGIDA-like protein 3 (FRL3) of Arabidopsis thaliana (Mouse-ear cress).